Reading from the N-terminus, the 236-residue chain is Ribosomal RNA large subunit methyltransferase E (236 aa).

S-adenosyl-L-methionine contacts are provided by Gly-76, Trp-78, Asp-99, Asp-115, and Asp-140. The active-site Proton acceptor is Lys-180.

It belongs to the class I-like SAM-binding methyltransferase superfamily. RNA methyltransferase RlmE family.

Its subcellular location is the cytoplasm. The catalysed reaction is uridine(2552) in 23S rRNA + S-adenosyl-L-methionine = 2'-O-methyluridine(2552) in 23S rRNA + S-adenosyl-L-homocysteine + H(+). Functionally, specifically methylates the uridine in position 2552 of 23S rRNA at the 2'-O position of the ribose in the fully assembled 50S ribosomal subunit. The sequence is that of Ribosomal RNA large subunit methyltransferase E from Rhodopseudomonas palustris (strain HaA2).